The sequence spans 302 residues: Proteasome subunit beta (302 aa).

A propeptide spans M1–G50 (removed in mature form; by autocatalysis). Catalysis depends on T51, which acts as the Nucleophile. The tract at residues E277 to S302 is disordered. The segment covering L287–S302 has biased composition (polar residues).

The protein belongs to the peptidase T1B family. In terms of assembly, the 20S proteasome core is composed of 14 alpha and 14 beta subunits that assemble into four stacked heptameric rings, resulting in a barrel-shaped structure. The two inner rings, each composed of seven catalytic beta subunits, are sandwiched by two outer rings, each composed of seven alpha subunits. The catalytic chamber with the active sites is on the inside of the barrel. Has a gated structure, the ends of the cylinder being occluded by the N-termini of the alpha-subunits. Is capped by the proteasome-associated ATPase, ARC.

The protein resides in the cytoplasm. The catalysed reaction is Cleavage of peptide bonds with very broad specificity.. It participates in protein degradation; proteasomal Pup-dependent pathway. Its activity is regulated as follows. The formation of the proteasomal ATPase ARC-20S proteasome complex, likely via the docking of the C-termini of ARC into the intersubunit pockets in the alpha-rings, may trigger opening of the gate for substrate entry. Interconversion between the open-gate and close-gate conformations leads to a dynamic regulation of the 20S proteasome proteolysis activity. Component of the proteasome core, a large protease complex with broad specificity involved in protein degradation. The chain is Proteasome subunit beta from Jonesia denitrificans (strain ATCC 14870 / DSM 20603 / BCRC 15368 / CIP 55.134 / JCM 11481 / NBRC 15587 / NCTC 10816 / Prevot 55134) (Listeria denitrificans).